The following is a 280-amino-acid chain: Hydroxyethylthiazole kinase (280 aa).

Methionine 58 provides a ligand contact to substrate. Arginine 129 lines the ATP pocket. Alanine 206 is a substrate binding site.

This sequence belongs to the Thz kinase family. It depends on Mg(2+) as a cofactor.

It catalyses the reaction 5-(2-hydroxyethyl)-4-methylthiazole + ATP = 4-methyl-5-(2-phosphooxyethyl)-thiazole + ADP + H(+). Its pathway is cofactor biosynthesis; thiamine diphosphate biosynthesis; 4-methyl-5-(2-phosphoethyl)-thiazole from 5-(2-hydroxyethyl)-4-methylthiazole: step 1/1. Functionally, thiazole kinase involved in thiamine salvage pathway. This Zea mays (Maize) protein is Hydroxyethylthiazole kinase (THIM).